The chain runs to 172 residues: Counting factor-associated protein B (172 aa).

The first 21 residues, 1 to 21, serve as a signal peptide directing secretion; that stretch reads MKLLNSLILLVLTCLVSSINT. 2 N-linked (GlcNAc...) asparagine glycosylation sites follow: asparagine 37 and asparagine 153.

The protein localises to the secreted. This chain is Counting factor-associated protein B (cfaB), found in Dictyostelium discoideum (Social amoeba).